Here is a 244-residue protein sequence, read N- to C-terminus: Monothiol glutaredoxin-4 (244 aa).

The Thioredoxin domain occupies 2–106 (SVEITFVEQF…LKAAIDEYIQ (105 aa)). A Glutaredoxin domain is found at 147–244 (NERLSTLTNA…NGELQEMLPN (98 aa)). Residue lysine 164 coordinates glutathione. Cysteine 172 is a [2Fe-2S] cluster binding site. Glutathione contacts are provided by residues 201–205 (RQGLK) and 226–227 (LD).

It belongs to the glutaredoxin family. Monothiol subfamily. Homodimer. Interacts with php4.

It localises to the cytoplasm. The protein resides in the nucleus. Monothiol glutaredoxin involved in the biogenesis of iron-sulfur clusters. Binds one iron-sulfur cluster per dimer. The iron-sulfur cluster is bound between subunits, and is complexed by a bound glutathione and a cysteine residue from each subunit. The sequence is that of Monothiol glutaredoxin-4 (grx4) from Schizosaccharomyces pombe (strain 972 / ATCC 24843) (Fission yeast).